We begin with the raw amino-acid sequence, 157 residues long: Protein FAM218A (157 aa).

Residues 104–127 form a disordered region; that stretch reads PAVTPPKLPGHSKSEGPPGKVRKR.

This chain is Protein FAM218A (FAM218A), found in Homo sapiens (Human).